Reading from the N-terminus, the 217-residue chain is Thiamine-phosphate synthase (217 aa).

Residues 42-46 (QFRDK) and D77 each bind 4-amino-2-methyl-5-(diphosphooxymethyl)pyrimidine. Mg(2+) contacts are provided by D78 and D97. Residue S117 coordinates 4-amino-2-methyl-5-(diphosphooxymethyl)pyrimidine. 144-146 (TIS) provides a ligand contact to 2-[(2R,5Z)-2-carboxy-4-methylthiazol-5(2H)-ylidene]ethyl phosphate. Position 147 (K147) interacts with 4-amino-2-methyl-5-(diphosphooxymethyl)pyrimidine. Residues G175 and 195 to 196 (IT) contribute to the 2-[(2R,5Z)-2-carboxy-4-methylthiazol-5(2H)-ylidene]ethyl phosphate site.

Belongs to the thiamine-phosphate synthase family. Mg(2+) serves as cofactor.

It catalyses the reaction 2-[(2R,5Z)-2-carboxy-4-methylthiazol-5(2H)-ylidene]ethyl phosphate + 4-amino-2-methyl-5-(diphosphooxymethyl)pyrimidine + 2 H(+) = thiamine phosphate + CO2 + diphosphate. The enzyme catalyses 2-(2-carboxy-4-methylthiazol-5-yl)ethyl phosphate + 4-amino-2-methyl-5-(diphosphooxymethyl)pyrimidine + 2 H(+) = thiamine phosphate + CO2 + diphosphate. It carries out the reaction 4-methyl-5-(2-phosphooxyethyl)-thiazole + 4-amino-2-methyl-5-(diphosphooxymethyl)pyrimidine + H(+) = thiamine phosphate + diphosphate. The protein operates within cofactor biosynthesis; thiamine diphosphate biosynthesis; thiamine phosphate from 4-amino-2-methyl-5-diphosphomethylpyrimidine and 4-methyl-5-(2-phosphoethyl)-thiazole: step 1/1. Its function is as follows. Condenses 4-methyl-5-(beta-hydroxyethyl)thiazole monophosphate (THZ-P) and 2-methyl-4-amino-5-hydroxymethyl pyrimidine pyrophosphate (HMP-PP) to form thiamine monophosphate (TMP). The protein is Thiamine-phosphate synthase of Levilactobacillus brevis (strain ATCC 367 / BCRC 12310 / CIP 105137 / JCM 1170 / LMG 11437 / NCIMB 947 / NCTC 947) (Lactobacillus brevis).